A 236-amino-acid chain; its full sequence is Small ribosomal subunit protein uS2c (236 aa).

This sequence belongs to the universal ribosomal protein uS2 family.

It is found in the plastid. The protein resides in the chloroplast. This is Small ribosomal subunit protein uS2c (rps2) from Nicotiana tabacum (Common tobacco).